The primary structure comprises 343 residues: Holliday junction branch migration complex subunit RuvB (343 aa).

The segment at 1-185 (MEQEDFNIRE…FGINLHLEYY (185 aa)) is large ATPase domain (RuvB-L). Residues leucine 24, arginine 25, glycine 66, lysine 69, threonine 70, threonine 71, 132–134 (EDY), arginine 175, tyrosine 185, and arginine 222 contribute to the ATP site. Threonine 70 contributes to the Mg(2+) binding site. Residues 186–256 (DDDILSNIIR…IAQFALEALN (71 aa)) form a small ATPAse domain (RuvB-S) region. Positions 259 to 343 (KYGLDEIDNK…YSSQKTLFND (85 aa)) are head domain (RuvB-H). Residues arginine 314 and arginine 319 each contribute to the DNA site.

This sequence belongs to the RuvB family. In terms of assembly, homohexamer. Forms an RuvA(8)-RuvB(12)-Holliday junction (HJ) complex. HJ DNA is sandwiched between 2 RuvA tetramers; dsDNA enters through RuvA and exits via RuvB. An RuvB hexamer assembles on each DNA strand where it exits the tetramer. Each RuvB hexamer is contacted by two RuvA subunits (via domain III) on 2 adjacent RuvB subunits; this complex drives branch migration. In the full resolvosome a probable DNA-RuvA(4)-RuvB(12)-RuvC(2) complex forms which resolves the HJ.

It localises to the cytoplasm. The enzyme catalyses ATP + H2O = ADP + phosphate + H(+). Its function is as follows. The RuvA-RuvB-RuvC complex processes Holliday junction (HJ) DNA during genetic recombination and DNA repair, while the RuvA-RuvB complex plays an important role in the rescue of blocked DNA replication forks via replication fork reversal (RFR). RuvA specifically binds to HJ cruciform DNA, conferring on it an open structure. The RuvB hexamer acts as an ATP-dependent pump, pulling dsDNA into and through the RuvAB complex. RuvB forms 2 homohexamers on either side of HJ DNA bound by 1 or 2 RuvA tetramers; 4 subunits per hexamer contact DNA at a time. Coordinated motions by a converter formed by DNA-disengaged RuvB subunits stimulates ATP hydrolysis and nucleotide exchange. Immobilization of the converter enables RuvB to convert the ATP-contained energy into a lever motion, pulling 2 nucleotides of DNA out of the RuvA tetramer per ATP hydrolyzed, thus driving DNA branch migration. The RuvB motors rotate together with the DNA substrate, which together with the progressing nucleotide cycle form the mechanistic basis for DNA recombination by continuous HJ branch migration. Branch migration allows RuvC to scan DNA until it finds its consensus sequence, where it cleaves and resolves cruciform DNA. The polypeptide is Holliday junction branch migration complex subunit RuvB (Bacteroides thetaiotaomicron (strain ATCC 29148 / DSM 2079 / JCM 5827 / CCUG 10774 / NCTC 10582 / VPI-5482 / E50)).